A 282-amino-acid chain; its full sequence is NADPH-dependent 7-cyano-7-deazaguanine reductase (282 aa).

Substrate is bound at residue 88–90 (IES). 90–91 (SK) serves as a coordination point for NADPH. Catalysis depends on cysteine 190, which acts as the Thioimide intermediate. Aspartate 197 functions as the Proton donor in the catalytic mechanism. Substrate is bound at residue 229–230 (HE). An NADPH-binding site is contributed by 258–259 (RG).

Belongs to the GTP cyclohydrolase I family. QueF type 2 subfamily. Homodimer.

It localises to the cytoplasm. It carries out the reaction 7-aminomethyl-7-carbaguanine + 2 NADP(+) = 7-cyano-7-deazaguanine + 2 NADPH + 3 H(+). The protein operates within tRNA modification; tRNA-queuosine biosynthesis. Its function is as follows. Catalyzes the NADPH-dependent reduction of 7-cyano-7-deazaguanine (preQ0) to 7-aminomethyl-7-deazaguanine (preQ1). This Escherichia coli O157:H7 protein is NADPH-dependent 7-cyano-7-deazaguanine reductase.